Reading from the N-terminus, the 429-residue chain is Enolase (429 aa).

Q167 lines the (2R)-2-phosphoglycerate pocket. The active-site Proton donor is E209. D246, E289, and D316 together coordinate Mg(2+). K341, R370, S371, and K392 together coordinate (2R)-2-phosphoglycerate. K341 serves as the catalytic Proton acceptor.

Belongs to the enolase family. Component of the RNA degradosome, a multiprotein complex involved in RNA processing and mRNA degradation. It depends on Mg(2+) as a cofactor.

The protein resides in the cytoplasm. The protein localises to the secreted. It is found in the cell surface. It catalyses the reaction (2R)-2-phosphoglycerate = phosphoenolpyruvate + H2O. It functions in the pathway carbohydrate degradation; glycolysis; pyruvate from D-glyceraldehyde 3-phosphate: step 4/5. In terms of biological role, catalyzes the reversible conversion of 2-phosphoglycerate (2-PG) into phosphoenolpyruvate (PEP). It is essential for the degradation of carbohydrates via glycolysis. This Pseudomonas aeruginosa (strain LESB58) protein is Enolase.